A 258-amino-acid chain; its full sequence is Exosome complex component Rrp41 (258 aa).

The protein belongs to the RNase PH family. Rrp41 subfamily. Component of the archaeal exosome complex. Forms a hexameric ring-like arrangement composed of 3 Rrp41-Rrp42 heterodimers. The hexameric ring associates with a trimer of Rrp4 and/or Csl4 subunits.

Its subcellular location is the cytoplasm. Catalytic component of the exosome, which is a complex involved in RNA degradation. Has 3'-&gt;5' exoribonuclease activity. Can also synthesize heteromeric RNA-tails. This is Exosome complex component Rrp41 from Archaeoglobus fulgidus (strain ATCC 49558 / DSM 4304 / JCM 9628 / NBRC 100126 / VC-16).